A 248-amino-acid chain; its full sequence is Cyclin-Q (248 aa).

The residue at position 1 (Met-1) is an N-acetylmethionine. The segment covering 1 to 12 has biased composition (gly residues); it reads MEAPEGGGGGPA. The segment at 1-21 is disordered; sequence MEAPEGGGGGPAARGPEGQPA.

Belongs to the cyclin family. Cyclin-like FAM58 subfamily. As to quaternary structure, associates with CDK10 to promote its kinase activity. Interacts with SALL1.

In terms of biological role, activating cyclin for the cyclin-associated kinase CDK10. The protein is Cyclin-Q of Homo sapiens (Human).